We begin with the raw amino-acid sequence, 141 residues long: Large ribosomal subunit protein bL17 (141 aa).

Positions 120–141 (TSAKGQDSGPVLTADEDEFEAA) are disordered.

The protein belongs to the bacterial ribosomal protein bL17 family. As to quaternary structure, part of the 50S ribosomal subunit. Contacts protein L32.

In Novosphingobium aromaticivorans (strain ATCC 700278 / DSM 12444 / CCUG 56034 / CIP 105152 / NBRC 16084 / F199), this protein is Large ribosomal subunit protein bL17.